We begin with the raw amino-acid sequence, 322 residues long: tRNA uridine(34) hydroxylase (322 aa).

A Rhodanese domain is found at 125–219; the sequence is QDPNTIVIDA…YGKDPEVQGK (95 aa). The Cysteine persulfide intermediate role is filled by cysteine 179.

Belongs to the TrhO family.

The enzyme catalyses uridine(34) in tRNA + AH2 + O2 = 5-hydroxyuridine(34) in tRNA + A + H2O. Catalyzes oxygen-dependent 5-hydroxyuridine (ho5U) modification at position 34 in tRNAs. The sequence is that of tRNA uridine(34) hydroxylase from Bacillus subtilis (strain 168).